The primary structure comprises 190 residues: Dynein axonemal light chain 1 (190 aa).

An N-acetylalanine modification is found at A2. LRR repeat units follow at residues 49–70 (NCEK…NGLK), 71–92 (NLRI…EAVG), 94–115 (TLEE…HIMK), and 116–137 (KLKI…VKLA). Position 56 is a phosphoserine (S56). In terms of domain architecture, LRRCT spans 150–190 (NPLEEKHSAENNWIEEATKRVPKLKKLDGTPVIKGDEEEDN).

It belongs to the dynein light chain LC1-type family. As to quaternary structure, interacts with ZMYND10 (via C-terminus). Interacts with DNAH5, a outer arm dynein heavy chain. Interacts with tubulin located within the A-tubule of the outer doublets in a ATP-independent manner. In terms of tissue distribution, expressed in tissues carrying motile cilia such as respiratory epithelia, ependyma and testis.

It is found in the cytoplasm. The protein localises to the cytoskeleton. Its subcellular location is the cilium axoneme. Its function is as follows. Part of the multisubunit axonemal ATPase complexes that generate the force for cilia motility and govern beat frequency. Component of the outer arm dynein (ODA). May be involved in a mechanosensory feedback mechanism controlling ODA activity based on external conformational cues by tethering the outer arm dynein heavy chain (DNAH5) to the microtubule within the axoneme. Important for ciliary function in the airways and for the function of the cilia that produce the nodal flow essential for the determination of the left-right asymmetry. This Homo sapiens (Human) protein is Dynein axonemal light chain 1.